Reading from the N-terminus, the 556-residue chain is Formate--tetrahydrofolate ligase (556 aa).

65 to 72 (TPAGEGKT) serves as a coordination point for ATP.

Belongs to the formate--tetrahydrofolate ligase family.

The enzyme catalyses (6S)-5,6,7,8-tetrahydrofolate + formate + ATP = (6R)-10-formyltetrahydrofolate + ADP + phosphate. It participates in one-carbon metabolism; tetrahydrofolate interconversion. This chain is Formate--tetrahydrofolate ligase, found in Clostridium acidurici (Gottschalkia acidurici).